The primary structure comprises 29 residues: NAD(P)H-quinone oxidoreductase subunit 5, chloroplastic (29 aa).

Residues Ser1 to Ser15 form a helical membrane-spanning segment.

Belongs to the complex I subunit 5 family. As to quaternary structure, NDH is composed of at least 16 different subunits, 5 of which are encoded in the nucleus.

The protein localises to the plastid. Its subcellular location is the chloroplast thylakoid membrane. It catalyses the reaction a plastoquinone + NADH + (n+1) H(+)(in) = a plastoquinol + NAD(+) + n H(+)(out). It carries out the reaction a plastoquinone + NADPH + (n+1) H(+)(in) = a plastoquinol + NADP(+) + n H(+)(out). In terms of biological role, NDH shuttles electrons from NAD(P)H:plastoquinone, via FMN and iron-sulfur (Fe-S) centers, to quinones in the photosynthetic chain and possibly in a chloroplast respiratory chain. The immediate electron acceptor for the enzyme in this species is believed to be plastoquinone. Couples the redox reaction to proton translocation, and thus conserves the redox energy in a proton gradient. The protein is NAD(P)H-quinone oxidoreductase subunit 5, chloroplastic of Pseudotsuga menziesii (Douglas-fir).